The sequence spans 243 residues: Protein Thf1 (243 aa).

The stretch at 180 to 224 forms a coiled coil; sequence SKARVEKDLNLYKSNLEKMAQAVELTEQILESERRKREQNESAKL. The span at 210 to 220 shows a compositional bias: basic and acidic residues; that stretch reads ESERRKREQNE. Residues 210 to 243 are disordered; that stretch reads ESERRKREQNESAKLNTGSSEQMSQGVEACSNIS. The span at 221 to 243 shows a compositional bias: polar residues; the sequence is SAKLNTGSSEQMSQGVEACSNIS.

Belongs to the THF1 family.

Functionally, may be involved in photosynthetic membrane biogenesis. The chain is Protein Thf1 from Prochlorococcus marinus (strain MIT 9313).